The primary structure comprises 418 residues: Probable serine/threonine-protein kinase nek2 (418 aa).

The Protein kinase domain maps to 4-264 (YEILGALGKG…VNELLGYSFI (261 aa)). Residues 10 to 18 (LGKGSFGVV) and lysine 33 contribute to the ATP site. Residue aspartate 135 is the Proton acceptor of the active site. Positions 278–363 (QGLKQMDEDL…SNLSLNCNNS (86 aa)) form a coiled coil.

It belongs to the protein kinase superfamily. NEK Ser/Thr protein kinase family. NIMA subfamily.

It catalyses the reaction L-seryl-[protein] + ATP = O-phospho-L-seryl-[protein] + ADP + H(+). The enzyme catalyses L-threonyl-[protein] + ATP = O-phospho-L-threonyl-[protein] + ADP + H(+). Functionally, involved in centrosome biogenesis. Seems to be required for recruitment of centrosomal material and might be involved in de novo centrosome formation. The polypeptide is Probable serine/threonine-protein kinase nek2 (nek2) (Dictyostelium discoideum (Social amoeba)).